The primary structure comprises 279 residues: Methyltransferase ausD (279 aa).

Residues 124–125 (DL), 152–153 (DI), and R244 contribute to the S-adenosyl-L-methionine site.

The protein belongs to the class I-like SAM-binding methyltransferase superfamily. Homodimer.

The protein operates within secondary metabolite biosynthesis; terpenoid biosynthesis. Methyltransferase; part of the gene cluster that mediates the biosynthesis of calidodehydroaustin, a fungal meroterpenoid. The first step of the pathway is the synthesis of 3,5-dimethylorsellinic acid by the polyketide synthase ausA. 3,5-dimethylorsellinic acid is then prenylated by the polyprenyl transferase ausN. Further epoxidation by the FAD-dependent monooxygenase ausM and cyclization by the probable terpene cyclase ausL lead to the formation of protoaustinoid A. Protoaustinoid A is then oxidized to spiro-lactone preaustinoid A3 by the combined action of the FAD-binding monooxygenases ausB and ausC, and the dioxygenase ausE. Acid-catalyzed keto-rearrangement and ring contraction of the tetraketide portion of preaustinoid A3 by ausJ lead to the formation of preaustinoid A4. The aldo-keto reductase ausK, with the help of ausH, is involved in the next step by transforming preaustinoid A4 into isoaustinone which is in turn hydroxylated by the P450 monooxygenase ausI to form austinolide. The cytochrome P450 monooxygenase ausG modifies austinolide to austinol. Austinol is further acetylated to austin by the O-acetyltransferase ausP, which spontaneously changes to dehydroaustin. The cytochrome P450 monooxygenase ausR then converts dehydroaustin is into 7-dehydrodehydroaustin. The hydroxylation catalyzed by ausR permits the O-acetyltransferase ausQ to add an additional acetyl group to the molecule, leading to the formation of acetoxydehydroaustin. The short chain dehydrogenase ausT catalyzes the reduction of the double bond present between carbon atoms 1 and 2 to convert 7-dehydrodehydroaustin into 1,2-dihydro-7-hydroxydehydroaustin. AusQ catalyzes not only an acetylation reaction but also the addition of the PKS ausV diketide product to 1,2-dihydro-7-hydroxydehydroaustin, forming precalidodehydroaustin. Finally, the iron/alpha-ketoglutarate-dependent dioxygenase converts precalidodehydroaustin into calidodehydroaustin. This is Methyltransferase ausD from Aspergillus calidoustus.